Reading from the N-terminus, the 820-residue chain is Leucine--tRNA ligase (820 aa).

A 'HIGH' region motif is present at residues 40–51; the sequence is PYPSGAGLHVGH. Residues 601 to 605 carry the 'KMSKS' region motif; sequence KMSKS. Lys604 is an ATP binding site.

This sequence belongs to the class-I aminoacyl-tRNA synthetase family.

The protein resides in the cytoplasm. It carries out the reaction tRNA(Leu) + L-leucine + ATP = L-leucyl-tRNA(Leu) + AMP + diphosphate. This chain is Leucine--tRNA ligase, found in Chlamydia abortus (strain DSM 27085 / S26/3) (Chlamydophila abortus).